A 190-amino-acid chain; its full sequence is MIGTLSGTVEEVVCSNRIILCVGGVGYLVQLPGRVLSGCQHGDHVRLYIETYVGRDGVSQLYGFANREEQNCMRMLIKVSGVNYKTAMAILDVLTPEQVFSAIVSEDRAALKVGGVGEKLISRIISELTPQVQKFELNRFAATTRTDSEAVAALLSLGYERTAALGALQKVGVCDSTEDAVRRALLELSK.

Positions 1–65 (MIGTLSGTVE…DGVSQLYGFA (65 aa)) are domain I. The tract at residues 66–137 (NREEQNCMRM…LTPQVQKFEL (72 aa)) is domain II. Residues 137 to 141 (LNRFA) are flexible linker. The domain III stretch occupies residues 142-190 (ATTRTDSEAVAALLSLGYERTAALGALQKVGVCDSTEDAVRRALLELSK).

Belongs to the RuvA family. As to quaternary structure, homotetramer. Forms an RuvA(8)-RuvB(12)-Holliday junction (HJ) complex. HJ DNA is sandwiched between 2 RuvA tetramers; dsDNA enters through RuvA and exits via RuvB. An RuvB hexamer assembles on each DNA strand where it exits the tetramer. Each RuvB hexamer is contacted by two RuvA subunits (via domain III) on 2 adjacent RuvB subunits; this complex drives branch migration. In the full resolvosome a probable DNA-RuvA(4)-RuvB(12)-RuvC(2) complex forms which resolves the HJ.

Its subcellular location is the cytoplasm. In terms of biological role, the RuvA-RuvB-RuvC complex processes Holliday junction (HJ) DNA during genetic recombination and DNA repair, while the RuvA-RuvB complex plays an important role in the rescue of blocked DNA replication forks via replication fork reversal (RFR). RuvA specifically binds to HJ cruciform DNA, conferring on it an open structure. The RuvB hexamer acts as an ATP-dependent pump, pulling dsDNA into and through the RuvAB complex. HJ branch migration allows RuvC to scan DNA until it finds its consensus sequence, where it cleaves and resolves the cruciform DNA. In Anaplasma marginale (strain Florida), this protein is Holliday junction branch migration complex subunit RuvA.